Reading from the N-terminus, the 414-residue chain is Alanine--glyoxylate aminotransferase (414 aa).

The N-terminal 23 residues, Met1 to Met23, are a transit peptide targeting the mitochondrion. Lys231 bears the N6-(pyridoxal phosphate)lysine mark. The residue at position 247 (Lys247) is an N6-acetyllysine; alternate. Lys247 carries the post-translational modification N6-succinyllysine; alternate. Residue Lys256 is modified to N6-acetyllysine. Residue Lys330 is modified to N6-acetyllysine; alternate. Lys330 is modified (N6-succinyllysine; alternate). The residue at position 334 (Lys334) is an N6-acetyllysine. Arg382 is a binding site for substrate. The short motif at Asn412–Leu414 is the Microbody targeting signal element.

It belongs to the class-V pyridoxal-phosphate-dependent aminotransferase family. As to quaternary structure, homodimer. The cofactor is pyridoxal 5'-phosphate.

It is found in the peroxisome. Its subcellular location is the mitochondrion matrix. The catalysed reaction is L-serine + pyruvate = 3-hydroxypyruvate + L-alanine. It catalyses the reaction glyoxylate + L-alanine = glycine + pyruvate. In terms of biological role, catalyzes the transamination of glyoxylate to glycine and contributes to the glyoxylate detoxification. Catalyzes the transamination between L-serine and pyruvate and weakly contributes to gluconeogenesis from the L-serine metabolism. This is Alanine--glyoxylate aminotransferase from Mus musculus (Mouse).